Consider the following 396-residue polypeptide: L-lactate dehydrogenase (396 aa).

The 380-residue stretch at 1 to 380 (MIISAASDYR…SGDSLVQELG (380 aa)) folds into the FMN hydroxy acid dehydrogenase domain. Tyr-24 contributes to the substrate binding site. 2 residues coordinate FMN: Ser-106 and Gln-127. Residue Tyr-129 coordinates substrate. Thr-155 is an FMN binding site. Arg-164 provides a ligand contact to substrate. Residue Lys-251 participates in FMN binding. His-275 (proton acceptor) is an active-site residue. Arg-278 serves as a coordination point for substrate. FMN is bound at residue 306–330 (DSGIRNGLDVVRMIALGADTVLLGR).

The protein belongs to the FMN-dependent alpha-hydroxy acid dehydrogenase family. Requires FMN as cofactor.

It is found in the cell inner membrane. The catalysed reaction is (S)-lactate + A = pyruvate + AH2. Its function is as follows. Catalyzes the conversion of L-lactate to pyruvate. Is coupled to the respiratory chain. The sequence is that of L-lactate dehydrogenase from Salmonella heidelberg (strain SL476).